A 1085-amino-acid chain; its full sequence is Solute carrier family 12 member 4 (1085 aa).

Over 1–119 (MPHFTVVPVD…RRAAKAPSMG (119 aa)) the chain is Cytoplasmic. Phosphoserine is present on serine 24. Basic and acidic residues predominate over residues 28 to 46 (YGERAEREDPDGHGNHRES). The disordered stretch occupies residues 28–47 (YGERAEREDPDGHGNHRESS). Residues serine 47, serine 59, serine 81, and serine 88 each carry the phosphoserine modification. The chain crosses the membrane as a discontinuously helical span at residues 120–141 (TLMGVYLPCLQNIFGVILFLRL). Positions 131 and 132 each coordinate K(+). At 142-149 (TWMVGTAG) the chain is on the extracellular side. The helical transmembrane segment at 150-172 (VLQALLIVLICCCCTLLTAISMS) threads the bilayer. At 173–196 (AIATNGVVPAGGSYFMISRSLGPE) the chain is on the cytoplasmic side. The chain crosses the membrane as a helical span at residues 197–225 (FGGAVGLCFYLGTTFAAAMYILGAIEILL). Tyrosine 216 contacts K(+). The Extracellular segment spans residues 226–248 (TYIAPPAAIFYPSGTHDTSNATL). A glycan (N-linked (GlcNAc...) asparagine) is linked at asparagine 245. The next 2 helical transmembrane spans lie at 249 to 271 (NNMR…VGVK) and 272 to 297 (YVNK…GGIK). The Extracellular portion of the chain corresponds to 298–419 (SMFDPPVFPV…LYVVADIATS (122 aa)). An intrachain disulfide couples cysteine 308 to cysteine 323. 3 N-linked (GlcNAc...) asparagine glycosylation sites follow: asparagine 312, asparagine 331, and asparagine 347. A disulfide bridge connects residues cysteine 343 and cysteine 353. Residues 420–440 (FTVLVGIFFPSVTGIMAGSNR) form a helical membrane-spanning segment. 2 residues coordinate K(+): proline 429 and threonine 432. Chloride is bound by residues glycine 433, isoleucine 434, and methionine 435. Residues 441 to 450 (SGDLRDAQKS) lie on the Cytoplasmic side of the membrane. The helical transmembrane segment at 451-473 (IPVGTILAIVTTSLVYFSSVVLF) threads the bilayer. Over 474 to 504 (GACIEGVVLRDKYGDGVSRNLVVGTLAWPSP) the chain is Extracellular. A helical transmembrane segment spans residues 505–531 (WVIVVGSFFSTCGAGLQSLTGAPRLLQ). Residues 532 to 554 (AIAKDNIIPFLRVFGHGKANGEP) lie on the Cytoplasmic side of the membrane. 2 helical membrane-spanning segments follow: residues 555–575 (TWAL…ASLD) and 576–598 (MVAP…ACAV). Tyrosine 589 lines the chloride pocket. The Cytoplasmic segment spans residues 599 to 612 (QTLLRTPNWRPRFK). The next 2 helical transmembrane spans lie at 613–635 (YYHW…VSSW) and 636–651 (YYAL…IYKY). At 652–1085 (IEYQGAEKEW…GGREVITIYS (434 aa)) the chain is on the cytoplasmic side. The scissor helix stretch occupies residues 665–681 (IRGLSLSAARYALLRLE). Residues leucine 697, lysine 699, lysine 707, tyrosine 708, and valine 730 each coordinate ATP. Residue serine 734 is modified to Phosphoserine. Residues glycine 794, tryptophan 795, and tyrosine 797 each contribute to the ATP site. 2 positions are modified to phosphoserine: serine 916 and serine 967. Position 983 is a phosphothreonine (threonine 983). A Phosphoserine modification is found at serine 1050.

It belongs to the SLC12A transporter family. K/Cl co-transporter subfamily. Homodimer; adopts a domain-swap conformation at the scissor helices connecting the transmembrane domain and C-terminal domain. Heterodimer with other K-Cl cotransporters. N-glycosylated. Post-translationally, phosphorylated, phosphorylation may regulate transporter activity.

The protein resides in the cell membrane. It carries out the reaction K(+)(in) + chloride(in) = K(+)(out) + chloride(out). Inhibited by WNK3. Functionally, mediates electroneutral potassium-chloride cotransport when activated by cell swelling. May contribute to cell volume homeostasis in single cells. May be involved in the regulation of basolateral Cl(-) exit in NaCl absorbing epithelia. This Oryctolagus cuniculus (Rabbit) protein is Solute carrier family 12 member 4 (SLC12A4).